The following is a 247-amino-acid chain: Cyclin-Q (247 aa).

Belongs to the cyclin family. Cyclin-like FAM58 subfamily.

Its function is as follows. May be an activating cyclin for the cyclin-associated kinase CDK10. The protein is Cyclin-Q (ccnq) of Danio rerio (Zebrafish).